We begin with the raw amino-acid sequence, 307 residues long: tRNA pseudouridine synthase B (307 aa).

D45 serves as the catalytic Nucleophile.

This sequence belongs to the pseudouridine synthase TruB family. Type 1 subfamily.

It catalyses the reaction uridine(55) in tRNA = pseudouridine(55) in tRNA. Its function is as follows. Responsible for synthesis of pseudouridine from uracil-55 in the psi GC loop of transfer RNAs. This is tRNA pseudouridine synthase B from Heliobacterium mobile (Heliobacillus mobilis).